The chain runs to 224 residues: uncharacterized protein (224 aa).

Transmembrane regions (helical) follow at residues 32–52 (ILTL…PLVV), 60–80 (LFTN…IYFF), 100–120 (IIYL…SGLG), 130–150 (AIAY…LFGF), and 162–182 (LGFS…FGII).

It belongs to the derlin family.

The protein resides in the endoplasmic reticulum membrane. This is an uncharacterized protein from Schizosaccharomyces pombe (strain 972 / ATCC 24843) (Fission yeast).